We begin with the raw amino-acid sequence, 300 residues long: 4-hydroxy-tetrahydrodipicolinate synthase (300 aa).

T54 is a binding site for pyruvate. Y142 acts as the Proton donor/acceptor in catalysis. K170 acts as the Schiff-base intermediate with substrate in catalysis. I212 provides a ligand contact to pyruvate.

It belongs to the DapA family. As to quaternary structure, homotetramer; dimer of dimers.

Its subcellular location is the cytoplasm. It carries out the reaction L-aspartate 4-semialdehyde + pyruvate = (2S,4S)-4-hydroxy-2,3,4,5-tetrahydrodipicolinate + H2O + H(+). It participates in amino-acid biosynthesis; L-lysine biosynthesis via DAP pathway; (S)-tetrahydrodipicolinate from L-aspartate: step 3/4. Its function is as follows. Catalyzes the condensation of (S)-aspartate-beta-semialdehyde [(S)-ASA] and pyruvate to 4-hydroxy-tetrahydrodipicolinate (HTPA). The polypeptide is 4-hydroxy-tetrahydrodipicolinate synthase (Halorhodospira halophila (strain DSM 244 / SL1) (Ectothiorhodospira halophila (strain DSM 244 / SL1))).